The following is a 107-amino-acid chain: MTFATQVGEVRSKDTGSYNWFDHFFLCVYLALGISKWPSCMKLYRVCFIFLFTGGFFLFWLSYNRDHERSSSLRIKKVPIHIQKSDYFPSSTWIAVLVFSWRHIFCF.

Transmembrane regions (helical) follow at residues 15 to 35 (TGSY…LGIS), 43 to 63 (LYRV…WLSY), and 87 to 107 (YFPS…IFCF).

The protein resides in the membrane. This is an uncharacterized protein from Saccharomyces cerevisiae (strain ATCC 204508 / S288c) (Baker's yeast).